A 129-amino-acid chain; its full sequence is uncharacterized protein (129 aa).

Helical transmembrane passes span 4 to 24 (FKFLKCVYLCFMVFVRLILII) and 37 to 57 (VISLLFIILTFLLILGCDLSI).

The protein to B.burgdorferi BBF20.

It is found in the cell membrane. This is an uncharacterized protein from Borreliella burgdorferi (strain ATCC 35210 / DSM 4680 / CIP 102532 / B31) (Borrelia burgdorferi).